Reading from the N-terminus, the 815-residue chain is Plakophilin-2 (815 aa).

Over residues M1–P12 the composition is skewed to basic and acidic residues. Disordered stretches follow at residues M1–E31 and Q76–S105. Polar residues predominate over residues Q13 to D25. Over residues S91 to S105 the composition is skewed to low complexity. 9 ARM repeats span residues K317–F357, P360–F399, N402–S442, P457–S498, P501–Y547, P604–A644, A652–R691, R693–Q737, and A740–R783.

It belongs to the beta-catenin family.

The protein resides in the nucleus. It is found in the cell junction. It localises to the desmosome. Its subcellular location is the cytoplasm. Its function is as follows. Required for development of the heart, potentially via cell-cell adhesion and modulation of expression of cardiac precursor genes. Plays a role in desmosome cell-cell junctions and their intracellular connectivity. This is Plakophilin-2 from Danio rerio (Zebrafish).